A 474-amino-acid polypeptide reads, in one-letter code: Glutamyl-tRNA(Gln) amidotransferase subunit A (474 aa).

Residues Lys76 and Ser151 each act as charge relay system in the active site. The Acyl-ester intermediate role is filled by Ser175.

Belongs to the amidase family. GatA subfamily. Heterotrimer of A, B and C subunits.

The catalysed reaction is L-glutamyl-tRNA(Gln) + L-glutamine + ATP + H2O = L-glutaminyl-tRNA(Gln) + L-glutamate + ADP + phosphate + H(+). In terms of biological role, allows the formation of correctly charged Gln-tRNA(Gln) through the transamidation of misacylated Glu-tRNA(Gln) in organisms which lack glutaminyl-tRNA synthetase. The reaction takes place in the presence of glutamine and ATP through an activated gamma-phospho-Glu-tRNA(Gln). In Chlorobium chlorochromatii (strain CaD3), this protein is Glutamyl-tRNA(Gln) amidotransferase subunit A.